Reading from the N-terminus, the 351-residue chain is Protein arginine N-methyltransferase 1-B (351 aa).

In terms of domain architecture, SAM-dependent MTase PRMT-type spans 30-331; the sequence is KDYYFDSYAH…KNNRDLDFTV (302 aa). Histidine 43, arginine 52, glycine 76, glutamate 98, and glutamate 127 together coordinate S-adenosyl-L-methionine. Residues glutamate 142 and glutamate 151 contribute to the active site.

Belongs to the class I-like SAM-binding methyltransferase superfamily. Protein arginine N-methyltransferase family. In terms of assembly, homodimer. Homooctamer; individual homodimers associates to form a homooctamer and homooligomerization is required for proper localization to the cell membrane. Individual homodimers can associate to form a homohexamer. Component of a complex with lsm14a/rap55a. Interacts with cirbp. From the onset of gastrulation, expressed in dorsal mesoderm, and in dorsal and ventral ectoderm. At the neurula and tail bud stages, expression is restricted to the neuroectoderm, with highest expression in the anterior neural plate.

The protein localises to the nucleus. It localises to the nucleoplasm. It is found in the cytoplasm. The protein resides in the cytosol. It carries out the reaction L-arginyl-[protein] + 2 S-adenosyl-L-methionine = N(omega),N(omega)-dimethyl-L-arginyl-[protein] + 2 S-adenosyl-L-homocysteine + 2 H(+). The enzyme catalyses L-arginyl-[protein] + S-adenosyl-L-methionine = N(omega)-methyl-L-arginyl-[protein] + S-adenosyl-L-homocysteine + H(+). It catalyses the reaction N(omega)-methyl-L-arginyl-[protein] + S-adenosyl-L-methionine = N(omega),N(omega)-dimethyl-L-arginyl-[protein] + S-adenosyl-L-homocysteine + H(+). Functionally, arginine methyltransferase that methylates (mono and asymmetric dimethylation) the guanidino nitrogens of arginyl residues present in target proteins. Constitutes the main enzyme that mediates monomethylation and asymmetric dimethylation of histone H4 'Arg-4' (H4R3me1 and H4R3me2a, respectively), a specific tag for epigenetic transcriptional activation. Methylates ilf3 to regulate its DNA-binding activity. Required for neural induction, playing a key role in the control of epidermal versus neural cell fate choice. The chain is Protein arginine N-methyltransferase 1-B (prmt1-b) from Xenopus laevis (African clawed frog).